The primary structure comprises 366 residues: Glycine betaine monooxygenase reductase subunit (366 aa).

The 104-residue stretch at asparagine 16–isoleucine 119 folds into the FAD-binding FR-type domain. The 2Fe-2S ferredoxin-type domain maps to histidine 282–tyrosine 366. Cysteine 316, cysteine 321, cysteine 324, and cysteine 354 together coordinate [2Fe-2S] cluster.

In the N-terminal section; belongs to the FAD-binding oxidoreductase type 6 family. The system is composed of an oxygenase subunit (GbcA) and a reductase subunit (GbcB). Requires FAD as cofactor. The cofactor is [2Fe-2S] cluster.

The catalysed reaction is glycine betaine + NADH + O2 + H(+) = N,N-dimethylglycine + formaldehyde + NAD(+) + H2O. Involved in degradation of glycine betaine. Part of a Rieske-type oxygenase system that catalyzes the conversion of glycine betaine (GB) to dimethylglycine (DMG). This subunit is the ferredoxin reductase component of the system. Required for growth on choline and GB, but not for growth on DMG. The chain is Glycine betaine monooxygenase reductase subunit from Pseudomonas aeruginosa (strain ATCC 15692 / DSM 22644 / CIP 104116 / JCM 14847 / LMG 12228 / 1C / PRS 101 / PAO1).